Consider the following 387-residue polypeptide: Phosphoglycerate kinase (387 aa).

Substrate is bound by residues D21 to N23, R36, H59 to R62, R113, and R146. Residues K197, E314, and G340–T343 each bind ATP.

This sequence belongs to the phosphoglycerate kinase family. In terms of assembly, monomer.

The protein localises to the cytoplasm. The catalysed reaction is (2R)-3-phosphoglycerate + ATP = (2R)-3-phospho-glyceroyl phosphate + ADP. The protein operates within carbohydrate degradation; glycolysis; pyruvate from D-glyceraldehyde 3-phosphate: step 2/5. The polypeptide is Phosphoglycerate kinase (Pseudomonas putida (strain W619)).